The following is a 490-amino-acid chain: ATP synthase subunit beta, chloroplastic (490 aa).

170–177 (GGAGVGKT) provides a ligand contact to ATP.

This sequence belongs to the ATPase alpha/beta chains family. F-type ATPases have 2 components, CF(1) - the catalytic core - and CF(0) - the membrane proton channel. CF(1) has five subunits: alpha(3), beta(3), gamma(1), delta(1), epsilon(1). CF(0) has four main subunits: a(1), b(1), b'(1) and c(9-12).

It localises to the plastid. The protein resides in the chloroplast thylakoid membrane. It catalyses the reaction ATP + H2O + 4 H(+)(in) = ADP + phosphate + 5 H(+)(out). Functionally, produces ATP from ADP in the presence of a proton gradient across the membrane. The catalytic sites are hosted primarily by the beta subunits. The protein is ATP synthase subunit beta, chloroplastic of Convolvulus arvensis (Field bindweed).